We begin with the raw amino-acid sequence, 90 residues long: Progonadoliberin-1 (90 aa).

An N-terminal signal peptide occupies residues 1 to 21 (MILKLMAGILLLTVCLEGCSS). Position 22 is a pyrrolidone carboxylic acid (glutamine 22). At glycine 31 the chain carries Glycine amide.

Belongs to the GnRH family. Post-translationally, the precursor is cleaved by ACE, which removes the Gly-Lys-Arg peptide at the C-terminus, leading to mature hormone. The mature form of Gonadoliberin-1 is also cleaved and degraded by ACE.

The protein resides in the secreted. In terms of biological role, stimulates the secretion of gonadotropins; it stimulates the secretion of both luteinizing and follicle-stimulating hormones. The sequence is that of Progonadoliberin-1 (Gnrh1) from Mus musculus (Mouse).